The chain runs to 492 residues: Catalase (492 aa).

Residues His65 and Asn138 contribute to the active site. Tyr348 lines the heme pocket.

This sequence belongs to the catalase family. Homotetramer. Heme is required as a cofactor.

It localises to the cytoplasm. The protein resides in the cytosol. Its subcellular location is the peroxisome matrix. It catalyses the reaction 2 H2O2 = O2 + 2 H2O. Its function is as follows. Catalyzes the degradation of hydrogen peroxide (H(2)O(2)) generated by peroxisomal oxidases to water and oxygen, thereby protecting cells from the toxic effects of hydrogen peroxide. This chain is Catalase, found in Soldanella alpina (Alpine snowbell).